The chain runs to 120 residues: C-C motif chemokine 2 (120 aa).

Residues 1–23 (MQRSSVLLCLLVIEATFCSLLMA) form the signal peptide. Residue glutamine 24 is modified to Pyrrolidone carboxylic acid. 2 cysteine pairs are disulfide-bonded: cysteine 33-cysteine 57 and cysteine 34-cysteine 73. The disordered stretch occupies residues 91-120 (RTQQKQNSTAPQTSKPLNIRFTTQDPKNRS). Residues 93–120 (QQKQNSTAPQTSKPLNIRFTTQDPKNRS) show a composition bias toward polar residues. A glycan (N-linked (GlcNAc...) asparagine) is linked at asparagine 97.

This sequence belongs to the intercrine beta (chemokine CC) family. In terms of assembly, monomer or homodimer; in equilibrium. Is tethered on endothelial cells by glycosaminoglycan (GAG) side chains of proteoglycans. Interacts with TNFAIP6 (via Link domain). Processing at the N-terminus can regulate receptor and target cell selectivity. Deletion of the N-terminal residue converts it from an activator of basophil to an eosinophil chemoattractant. Post-translationally, N-Glycosylated.

The protein localises to the secreted. Acts as a ligand for C-C chemokine receptor CCR2. Signals through binding and activation of CCR2 and induces a strong chemotactic response and mobilization of intracellular calcium ions. Exhibits a chemotactic activity for monocytes and basophils but not neutrophils or eosinophils. Plays an important role in mediating peripheral nerve injury-induced neuropathic pain. Increases NMDA-mediated synaptic transmission in both dopamine D1 and D2 receptor-containing neurons, which may be caused by MAPK/ERK-dependent phosphorylation of GRIN2B/NMDAR2B. The sequence is that of C-C motif chemokine 2 (CCL2) from Cavia porcellus (Guinea pig).